Reading from the N-terminus, the 565-residue chain is Hemagglutinin-neuraminidase (565 aa).

Residues Met-1–Thr-20 are Intravirion-facing. The chain crosses the membrane as a helical span at residues Leu-21–Ile-41. Residues Arg-42–Ser-565 lie on the Virion surface side of the membrane. 2 N-linked (GlcNAc...) asparagine; by host glycosylation sites follow: Asn-110 and Asn-139. Intrachain disulfides connect Cys-161–Cys-185, Cys-175–Cys-236, and Cys-227–Cys-240. An involved in neuraminidase activity region spans residues Asn-223–Ser-228. Asn-267 carries an N-linked (GlcNAc...) asparagine; by host glycan. Intrachain disulfides connect Cys-333-Cys-454, Cys-365-Cys-375, and Cys-448-Cys-458. An N-linked (GlcNAc...) asparagine; by host glycan is attached at Asn-504. A disulfide bridge links Cys-528 with Cys-539.

Belongs to the paramyxoviruses hemagglutinin-neuraminidase family. Homotetramer; composed of disulfide-linked homodimers. Interacts with F protein trimer.

It is found in the virion membrane. It localises to the host cell membrane. The enzyme catalyses Hydrolysis of alpha-(2-&gt;3)-, alpha-(2-&gt;6)-, alpha-(2-&gt;8)- glycosidic linkages of terminal sialic acid residues in oligosaccharides, glycoproteins, glycolipids, colominic acid and synthetic substrates.. Attaches the virus to sialic acid-containing cell receptors and thereby initiating infection. Binding of HN protein to the receptor induces a conformational change that allows the F protein to trigger virion/cell membranes fusion. In terms of biological role, neuraminidase activity ensures the efficient spread of the virus by dissociating the mature virions from the neuraminic acid containing glycoproteins. The protein is Hemagglutinin-neuraminidase (HN) of Canis lupus familiaris (Dog).